A 375-amino-acid polypeptide reads, in one-letter code: Queuine tRNA-ribosyltransferase (375 aa).

D93 serves as the catalytic Proton acceptor. Substrate-binding positions include 93–97 (DSGGF), D147, Q191, and G218. The interval 249 to 255 (GVGTPLD) is RNA binding. D268 acts as the Nucleophile in catalysis. An RNA binding; important for wobble base 34 recognition region spans residues 273–277 (TRNAR). Positions 306, 308, 311, and 337 each coordinate Zn(2+).

It belongs to the queuine tRNA-ribosyltransferase family. Homodimer. Within each dimer, one monomer is responsible for RNA recognition and catalysis, while the other monomer binds to the replacement base PreQ1. Zn(2+) serves as cofactor.

It carries out the reaction 7-aminomethyl-7-carbaguanine + guanosine(34) in tRNA = 7-aminomethyl-7-carbaguanosine(34) in tRNA + guanine. The protein operates within tRNA modification; tRNA-queuosine biosynthesis. Functionally, catalyzes the base-exchange of a guanine (G) residue with the queuine precursor 7-aminomethyl-7-deazaguanine (PreQ1) at position 34 (anticodon wobble position) in tRNAs with GU(N) anticodons (tRNA-Asp, -Asn, -His and -Tyr). Catalysis occurs through a double-displacement mechanism. The nucleophile active site attacks the C1' of nucleotide 34 to detach the guanine base from the RNA, forming a covalent enzyme-RNA intermediate. The proton acceptor active site deprotonates the incoming PreQ1, allowing a nucleophilic attack on the C1' of the ribose to form the product. After dissociation, two additional enzymatic reactions on the tRNA convert PreQ1 to queuine (Q), resulting in the hypermodified nucleoside queuosine (7-(((4,5-cis-dihydroxy-2-cyclopenten-1-yl)amino)methyl)-7-deazaguanosine). The polypeptide is Queuine tRNA-ribosyltransferase (Nitratidesulfovibrio vulgaris (strain DP4) (Desulfovibrio vulgaris)).